A 711-amino-acid polypeptide reads, in one-letter code: MTQNPKRYTITAALPYTNGPIHIGHLAGVYVPADIYSRYLRLQGKDVAFICGSDEHGVAISMKAKKEGVTPQEVIDKYDGIIRKSFADFGISFNNYSRTSAKIHHDTASEFFRTLYDKGDFIEEVTEQLYDAKANQFLADRFVVGTCPKCDNPEAYGDQCEKCGSTLNATDLINPKSTITGETPILKETKHWFLPLDRYSDFLTKWILEGHKNDWKPNVYGQVKSWIDGGLEPRAVTRDLDWGIDVPVEGAEGKKLYVWFDAPIGYISSTKEWAAREGKDWEPYWKDEETKLVHFIGKDNIVFHCIIFPAMLKAEGSYILPDNVPANEFLNLEGNKLSTSKNWAVWLHEYLEEFPDKQDVLRYALTSNAPETKDNDFTWKDFQARNNNELVAIFGNFVNRVVVLTNKYYDGVIPTPNEFTEIDEQTLAELKAYPAVISSSVERYRFREALGELMNVARLGNKYLADEEPWKVMKDNPERVKTQMYVALQIAAALSVLAEPFLPFTAAKLSKILNLGDLKEHFEGFSKFLKERHQDANDIIIDKTLGWNDISENSDLIPAGHKIGEAELLFAKIEDEEIQKQIDKLEATKTANIAENQKAEPQKDLIQFEDFAKMDIRIGTILEAEKMPKANKLLVLKVDTGIDVRTIVSGIAESFSPEEIIGKRVSVLANLAPRALRGVESQGMILMTTNAEGKLVFVNPDADAPNGATVN.

Positions 15-25 (PYTNGPIHIGH) match the 'HIGH' region motif. Positions 147, 150, 160, and 163 each coordinate Zn(2+). Positions 336–340 (KLSTS) match the 'KMSKS' region motif. Thr339 contributes to the ATP binding site. Positions 610 to 711 (DFAKMDIRIG…ADAPNGATVN (102 aa)) constitute a tRNA-binding domain.

The protein belongs to the class-I aminoacyl-tRNA synthetase family. MetG type 1 subfamily. In terms of assembly, homodimer. It depends on Zn(2+) as a cofactor.

The protein resides in the cytoplasm. It catalyses the reaction tRNA(Met) + L-methionine + ATP = L-methionyl-tRNA(Met) + AMP + diphosphate. Its function is as follows. Is required not only for elongation of protein synthesis but also for the initiation of all mRNA translation through initiator tRNA(fMet) aminoacylation. This is Methionine--tRNA ligase from Flavobacterium johnsoniae (strain ATCC 17061 / DSM 2064 / JCM 8514 / BCRC 14874 / CCUG 350202 / NBRC 14942 / NCIMB 11054 / UW101) (Cytophaga johnsonae).